Here is a 321-residue protein sequence, read N- to C-terminus: MTNGVPALDDILERLHVVALPMRVRFRGITVRELALIDGPAGWGEFGAFVEYEPPEAAAWLSSALEAAYRPAPAALRDRVPINATVPAVSAERVPEVLARFPGARTAKVKVAEPGQSLADDVARVNAVRESVPVVRVDANGGWSVDDAVEAAAALTADGELEYLEQPCATVEELAALRARVDVPIAADESIRKAEDPLRVVRAHAADIAVLKVAPLGGVARMLDIAAQIDIPIVVSSALDSSVGIGRGLLAAAALPELRHACGLGTGGLFVDDVAEPRVPVDGCLAVEPAVPDPARLAALAAPEPRRQWWIDRVCACHALI.

The Proton donor role is filled by K110. Mg(2+)-binding residues include D138, E165, and D188. K212 (proton acceptor) is an active-site residue.

It belongs to the mandelate racemase/muconate lactonizing enzyme family. MenC type 1 subfamily. Requires a divalent metal cation as cofactor.

It catalyses the reaction (1R,6R)-6-hydroxy-2-succinyl-cyclohexa-2,4-diene-1-carboxylate = 2-succinylbenzoate + H2O. It functions in the pathway quinol/quinone metabolism; 1,4-dihydroxy-2-naphthoate biosynthesis; 1,4-dihydroxy-2-naphthoate from chorismate: step 4/7. Its pathway is quinol/quinone metabolism; menaquinone biosynthesis. Converts 2-succinyl-6-hydroxy-2,4-cyclohexadiene-1-carboxylate (SHCHC) to 2-succinylbenzoate (OSB). This is o-succinylbenzoate synthase from Mycolicibacterium smegmatis (strain ATCC 700084 / mc(2)155) (Mycobacterium smegmatis).